The sequence spans 194 residues: ATP-dependent Clp protease proteolytic subunit (194 aa).

The active-site Nucleophile is Ser99. His124 is a catalytic residue.

This sequence belongs to the peptidase S14 family. In terms of assembly, fourteen ClpP subunits assemble into 2 heptameric rings which stack back to back to give a disk-like structure with a central cavity, resembling the structure of eukaryotic proteasomes.

The protein resides in the cytoplasm. The enzyme catalyses Hydrolysis of proteins to small peptides in the presence of ATP and magnesium. alpha-casein is the usual test substrate. In the absence of ATP, only oligopeptides shorter than five residues are hydrolyzed (such as succinyl-Leu-Tyr-|-NHMec, and Leu-Tyr-Leu-|-Tyr-Trp, in which cleavage of the -Tyr-|-Leu- and -Tyr-|-Trp bonds also occurs).. Functionally, cleaves peptides in various proteins in a process that requires ATP hydrolysis. Has a chymotrypsin-like activity. Plays a major role in the degradation of misfolded proteins. In Borrelia garinii subsp. bavariensis (strain ATCC BAA-2496 / DSM 23469 / PBi) (Borreliella bavariensis), this protein is ATP-dependent Clp protease proteolytic subunit.